A 299-amino-acid polypeptide reads, in one-letter code: MNQVEMTEFPVGKPEEALYGVASTPDGALWFTLAKGNAIGRLSPDGEVSRFPLPHADGQPTTITCGPDGRPWFTLSSANAVGRLSPDGALRMFELPRPASRPFGIAAGHDGCLWFAEMAGDRIGRITIDGDIEEYDLPVKGGYPSCMAAGRDGLMWFTLNQAGAIGSISATAAPRIFPLGAADAAPVGIASDAQGALWIAQAGNGAIARFDAGGRITEFPLHSRAARPHALAADAAGNLWFTEWGANRIGRISEAGDTAGYELAAPGSEPHGIAIDPHGCVWAALETGSLVRLQASPRD.

H229 lines the substrate pocket. E269 provides a ligand contact to Mg(2+). Residue H271 is the Proton acceptor of the active site. E286 serves as a coordination point for Mg(2+).

This sequence belongs to the Vgb family. In terms of assembly, monomer. Mg(2+) serves as cofactor.

Functionally, inactivates the type B streptogramin antibiotics by linearizing the lactone ring at the ester linkage, generating a free phenylglycine carboxylate and converting the threonyl moiety into 2-amino-butenoic acid. This chain is Virginiamycin B lyase (vgb), found in Bordetella pertussis (strain Tohama I / ATCC BAA-589 / NCTC 13251).